The sequence spans 406 residues: CCA-adding enzyme (406 aa).

Positions 32 and 35 each coordinate ATP. CTP-binding residues include glycine 32 and arginine 35. The Mg(2+) site is built by aspartate 45 and aspartate 47. Residues arginine 116, aspartate 159, arginine 162, arginine 165, and arginine 168 each contribute to the ATP site. Positions 116, 159, 162, 165, and 168 each coordinate CTP.

The protein belongs to the tRNA nucleotidyltransferase/poly(A) polymerase family. Bacterial CCA-adding enzyme type 3 subfamily. In terms of assembly, homodimer. Mg(2+) is required as a cofactor.

The catalysed reaction is a tRNA precursor + 2 CTP + ATP = a tRNA with a 3' CCA end + 3 diphosphate. The enzyme catalyses a tRNA with a 3' CCA end + 2 CTP + ATP = a tRNA with a 3' CCACCA end + 3 diphosphate. In terms of biological role, catalyzes the addition and repair of the essential 3'-terminal CCA sequence in tRNAs without using a nucleic acid template. Adds these three nucleotides in the order of C, C, and A to the tRNA nucleotide-73, using CTP and ATP as substrates and producing inorganic pyrophosphate. tRNA 3'-terminal CCA addition is required both for tRNA processing and repair. Also involved in tRNA surveillance by mediating tandem CCA addition to generate a CCACCA at the 3' terminus of unstable tRNAs. While stable tRNAs receive only 3'-terminal CCA, unstable tRNAs are marked with CCACCA and rapidly degraded. This Enterococcus faecalis (strain ATCC 700802 / V583) protein is CCA-adding enzyme.